The following is a 1103-amino-acid chain: PALM2-AKAP2 fusion protein (1103 aa).

2 disordered regions span residues glutamate 178–proline 197 and tyrosine 304–aspartate 396. Polar residues predominate over residues serine 179 to proline 189. 3 positions are modified to phosphoserine: serine 322, serine 352, and serine 383. Positions valine 380–cysteine 392 are enriched in low complexity. A Glycyl lysine isopeptide (Lys-Gly) (interchain with G-Cter in SUMO1); alternate cross-link involves residue lysine 405. Residue lysine 405 forms a Glycyl lysine isopeptide (Lys-Gly) (interchain with G-Cter in SUMO2); alternate linkage. Residues glutamate 444 to glutamine 521 are a coiled coil. Disordered stretches follow at residues glutamate 483–lysine 544 and asparagine 566–tryptophan 662. Positions leucine 490–glutamine 505 are enriched in basic and acidic residues. A compositionally biased stretch (low complexity) spans glutamine 506–glutamine 521. A compositionally biased stretch (polar residues) spans proline 522 to alanine 531. Over residues serine 533–lysine 544 the composition is skewed to basic and acidic residues. The span at asparagine 566 to arginine 579 shows a compositional bias: polar residues. Phosphoserine is present on residues serine 567 and serine 624. Positions alanine 633 to glutamine 643 are enriched in polar residues. 3 positions are modified to phosphoserine: serine 692, serine 696, and serine 748. Polar residues predominate over residues glutamine 745 to proline 763. A disordered region spans residues glutamine 745–aspartate 794. The residue at position 757 (threonine 757) is a Phosphothreonine. Residues leucine 797–glutamine 810 are PKA-RII subunit binding domain. The span at valine 817–alanine 829 shows a compositional bias: basic and acidic residues. The segment at valine 817–proline 907 is disordered. Phosphoserine is present on serine 862. The segment covering glutamine 865–glycine 886 has biased composition (basic and acidic residues). Positions lysine 941–serine 979 form a coiled coil. Residues serine 951, serine 979, serine 1009, and serine 1016 each carry the phosphoserine modification. The interval glutamate 962–leucine 1035 is disordered. Positions serine 976–serine 990 are enriched in polar residues.

In terms of tissue distribution, expressed in infantile heart and muscle, and fibroblasts.

It localises to the apical cell membrane. In terms of biological role, binds to regulatory subunit (RII) of protein kinase A. May be involved in establishing polarity in signaling systems or in integrating PKA-RII isoforms with downstream effectors to capture, amplify and focus diffuse, trans-cellular signals carried by cAMP. Binds to and modulates the structure of the actin cytoskeleton. This is PALM2-AKAP2 fusion protein from Homo sapiens (Human).